The sequence spans 908 residues: Glutamate receptor ionotropic, kainate 2 (908 aa).

Residues 1–31 form the signal peptide; sequence MKIIFPILSNPVFRRTVKLLLCLLWIGYSQG. Topologically, residues 32 to 561 are extracellular; the sequence is TTHVLRFGGI…VFSFLNPLSP (530 aa). N-linked (GlcNAc...) asparagine glycosylation is found at asparagine 67, asparagine 73, asparagine 275, asparagine 378, asparagine 412, asparagine 423, and asparagine 430. Residues cysteine 96 and cysteine 347 are joined by a disulfide bond. L-glutamate-binding residues include proline 516, alanine 518, and arginine 523. The N-linked (GlcNAc...) asparagine glycan is linked to asparagine 546. The chain crosses the membrane as a helical span at residues 562–582; that stretch reads DIWMYILLAYLGVSCVLFVIA. The Cytoplasmic segment spans residues 583–635; that stretch reads RFSPYEWYNPHPCNPDSDVVENNFTLLNSFWFGVGALMQQGSELMPKALSTRI. The chain crosses the membrane as a helical span at residues 636–656; it reads VGGIWWFFTLIIISSYTANLA. The Extracellular segment spans residues 657–819; it reads AFLTVERMES…KEASALGVQN (163 aa). 3 residues coordinate L-glutamate: alanine 689, threonine 690, and glutamate 738. A disulfide bridge connects residues cysteine 750 and cysteine 804. Asparagine 751 carries an N-linked (GlcNAc...) asparagine glycan. The helical transmembrane segment at 820–840 threads the bilayer; it reads IGGIFIVLAAGLVLSVFVAVG. Residues 841 to 908 are Cytoplasmic-facing; that stretch reads EFLYKSKKNA…RRLPGKETMA (68 aa). Phosphoserine; by PKC occurs at positions 846 and 868. Residue lysine 886 forms a Glycyl lysine isopeptide (Lys-Gly) (interchain with G-Cter in SUMO1) linkage.

Belongs to the glutamate-gated ion channel (TC 1.A.10.1) family. GRIK2 subfamily. In terms of assembly, homotetramer and heterotetramer with GRIK5. Tetramers may be formed by the dimerization of dimers. Assembles into a kainate-gated homomeric channel that does not bind AMPA. Can form functional heteromeric receptors with GRIK5. Can form functional heteromeric receptors with GRIK3 and GRIK4. Interacts with DLG4. Interacts with NETO2. Interacts (via C-terminus) with KLHL17 (via kelch repeats); the interaction targets GRIK2 for degradation via ubiquitin-proteasome pathway. Sumoylation mediates kainate receptor-mediated endocytosis and regulates synaptic transmission. Sumoylation is enhanced by PIAS3 and desumoylated by SENP1. Post-translationally, ubiquitinated. Ubiquitination regulates the GRIK2 levels at the synapse by leading kainate receptor degradation through proteasome. In terms of processing, phosphorylated by PKC at Ser-868 upon agonist activation, this directly enhance sumoylation. In terms of tissue distribution, expression is higher in cerebellum than in cerebral cortex.

The protein localises to the cell membrane. It is found in the postsynaptic cell membrane. It catalyses the reaction Ca(2+)(in) = Ca(2+)(out). The enzyme catalyses Na(+)(in) = Na(+)(out). Cold receptor activity activated by temperatures between 10-19 degrees Celsius. In terms of biological role, ionotropic glutamate receptor that functions as a cation permeable ligand-gated ion channel, gated by L-glutamate and the glutamatergic agonist kainic acid. L-glutamate acts as an excitatory neurotransmitter at many synapses in the central nervous system. Binding of the excitatory neurotransmitter L-glutamate induces a conformation change, leading to the opening of the cation channel, and thereby converts the chemical signal to an electrical impulse. The receptor then desensitizes rapidly and enters a transient inactive state, characterized by the presence of bound agonist. Modulates cell surface expression of NETO2. In association with GRIK3, involved in presynaptic facilitation of glutamate release at hippocampal mossy fiber synapses. Independent of its ionotropic glutamate receptor activity, acts as a thermoreceptor conferring sensitivity to cold temperatures. Functions in dorsal root ganglion neurons. This chain is Glutamate receptor ionotropic, kainate 2 (GRIK2), found in Homo sapiens (Human).